The chain runs to 673 residues: DNA ligase (673 aa).

NAD(+)-binding positions include 34 to 38 (DAEYD), 83 to 84 (SL), and E116. The active-site N6-AMP-lysine intermediate is K118. NAD(+)-binding residues include R139, E176, K293, and K317. Zn(2+) contacts are provided by C411, C414, C429, and C435. One can recognise a BRCT domain in the interval 595 to 673 (NQQNPFFGKT…EDEFLKWVNS (79 aa)).

Belongs to the NAD-dependent DNA ligase family. LigA subfamily. It depends on Mg(2+) as a cofactor. Requires Mn(2+) as cofactor.

The enzyme catalyses NAD(+) + (deoxyribonucleotide)n-3'-hydroxyl + 5'-phospho-(deoxyribonucleotide)m = (deoxyribonucleotide)n+m + AMP + beta-nicotinamide D-nucleotide.. Its function is as follows. DNA ligase that catalyzes the formation of phosphodiester linkages between 5'-phosphoryl and 3'-hydroxyl groups in double-stranded DNA using NAD as a coenzyme and as the energy source for the reaction. It is essential for DNA replication and repair of damaged DNA. This Legionella pneumophila (strain Lens) protein is DNA ligase.